The chain runs to 459 residues: Cysteine--tRNA ligase (459 aa).

Cysteine 28 serves as a coordination point for Zn(2+). The 'HIGH' region motif lies at 30–40 (VTIYDLCHIGH). Zn(2+)-binding residues include cysteine 209, histidine 234, and glutamate 238. Residues 266–270 (KMSKS) carry the 'KMSKS' region motif. Lysine 269 is a binding site for ATP.

It belongs to the class-I aminoacyl-tRNA synthetase family. In terms of assembly, monomer. Zn(2+) serves as cofactor.

It localises to the cytoplasm. The enzyme catalyses tRNA(Cys) + L-cysteine + ATP = L-cysteinyl-tRNA(Cys) + AMP + diphosphate. The chain is Cysteine--tRNA ligase from Shewanella baltica (strain OS155 / ATCC BAA-1091).